We begin with the raw amino-acid sequence, 130 residues long: Ribosome-binding factor A (130 aa).

It belongs to the RbfA family. As to quaternary structure, monomer. Binds 30S ribosomal subunits, but not 50S ribosomal subunits or 70S ribosomes.

The protein resides in the cytoplasm. In terms of biological role, one of several proteins that assist in the late maturation steps of the functional core of the 30S ribosomal subunit. Associates with free 30S ribosomal subunits (but not with 30S subunits that are part of 70S ribosomes or polysomes). Required for efficient processing of 16S rRNA. May interact with the 5'-terminal helix region of 16S rRNA. In Pseudomonas aeruginosa (strain LESB58), this protein is Ribosome-binding factor A.